We begin with the raw amino-acid sequence, 717 residues long: P-loop NTPase domain-containing protein LPA1 homolog 2 (717 aa).

2 disordered regions span residues 235–259 (KKLK…SSTT) and 532–629 (HYSS…DTIS). 2 stretches are compositionally biased toward polar residues: residues 243–259 (VNSN…SSTT) and 532–545 (HYSS…TSDG). Residues 559–582 (SDEDDEEGDDDFHEPDSDEDLSDN) are compositionally biased toward acidic residues. Residues 583–602 (NDERNRDEIGSVDEESTKSD) are compositionally biased toward basic and acidic residues.

May be not required for the accumulation of phytic acid in seeds. Phytic acid is the primary storage form of phosphorus in cereal grains and other plant seeds. The polypeptide is P-loop NTPase domain-containing protein LPA1 homolog 2 (Arabidopsis thaliana (Mouse-ear cress)).